The following is a 338-amino-acid chain: Ribosomal RNA small subunit methyltransferase C (338 aa).

This sequence belongs to the methyltransferase superfamily. RsmC family. In terms of assembly, monomer.

It localises to the cytoplasm. It catalyses the reaction guanosine(1207) in 16S rRNA + S-adenosyl-L-methionine = N(2)-methylguanosine(1207) in 16S rRNA + S-adenosyl-L-homocysteine + H(+). Its function is as follows. Specifically methylates the guanine in position 1207 of 16S rRNA in the 30S particle. In Photorhabdus laumondii subsp. laumondii (strain DSM 15139 / CIP 105565 / TT01) (Photorhabdus luminescens subsp. laumondii), this protein is Ribosomal RNA small subunit methyltransferase C.